We begin with the raw amino-acid sequence, 248 residues long: Large ribosomal subunit protein uL29m (248 aa).

Disordered stretches follow at residues 77–107 (VSKY…GFFG) and 223–248 (AYEP…PPSS).

Belongs to the universal ribosomal protein uL29 family. Component of the mitochondrial large ribosomal subunit. Mature mitochondrial ribosomes consist of a small (37S) and a large (54S) subunit. The 37S subunit contains at least 33 different proteins and 1 molecule of RNA (15S). The 54S subunit contains at least 45 different proteins and 1 molecule of RNA (21S).

The protein resides in the mitochondrion. This is Large ribosomal subunit protein uL29m (MRPL4) from Ajellomyces capsulatus (strain NAm1 / WU24) (Darling's disease fungus).